The sequence spans 285 residues: MVKVGIIGGSGLEDPNILLNPTAISIDTPYGQPSDHLIQGTINGVECVLLARHGRKHDIMPGNVNYRANLWALYSLGVDVIIASTACGSLKEEVAPGHLLFPDSVFDRTNSRKATFFDGTFSGAPGVSHIQAHPTYNEKLRQVLISTAEKCKLVHHRTGFGVCIEGPRFSTKAESMVFKSWGASLVNMTMMPECILAKELGIPYATTALVTDYDCWKDEDQVTAASVMKVFAANVEKAKTLFIEAVAEIGKIDWSAEILQTKTAARQSIMISPDVEVEFLKVPKT.

Phosphate is bound by residues S10, 52 to 53 (RH), and 85 to 86 (TA). M188 serves as a coordination point for substrate. T189 lines the phosphate pocket. 212 to 214 (DYD) provides a ligand contact to substrate.

It belongs to the PNP/MTAP phosphorylase family. MTAP subfamily. As to quaternary structure, homotrimer.

It is found in the cytoplasm. The protein localises to the nucleus. It catalyses the reaction S-methyl-5'-thioadenosine + phosphate = 5-(methylsulfanyl)-alpha-D-ribose 1-phosphate + adenine. It functions in the pathway amino-acid biosynthesis; L-methionine biosynthesis via salvage pathway; S-methyl-5-thio-alpha-D-ribose 1-phosphate from S-methyl-5'-thioadenosine (phosphorylase route): step 1/1. Functionally, catalyzes the reversible phosphorylation of S-methyl-5'-thioadenosine (MTA) to adenine and 5-methylthioribose-1-phosphate. Involved in the breakdown of MTA, a major by-product of polyamine biosynthesis. Responsible for the first step in the methionine salvage pathway after MTA has been generated from S-adenosylmethionine. Has broad substrate specificity with 6-aminopurine nucleosides as preferred substrates. In Caenorhabditis briggsae, this protein is S-methyl-5'-thioadenosine phosphorylase.